The primary structure comprises 317 residues: Melanocyte-stimulating hormone receptor (317 aa).

At Met1–Glu37 the chain is on the extracellular side. N-linked (GlcNAc...) asparagine glycosylation is found at Asn15 and Asn29. A helical transmembrane segment spans residues Val38–Ile63. The Cytoplasmic segment spans residues Ala64 to Pro72. A helical membrane pass occupies residues Met73 to Leu93. Over Glu94–Asp118 the chain is Extracellular. Residues Val119–Val140 form a helical membrane-spanning segment. The Cytoplasmic portion of the chain corresponds to Asp141–Arg163. Residues Ala164 to Tyr183 traverse the membrane as a helical segment. Over Asp184–Cys191 the chain is Extracellular. The helical transmembrane segment at Leu192–Leu211 threads the bilayer. The Cytoplasmic portion of the chain corresponds to Ala212–Ala240. The chain crosses the membrane as a helical span at residues Ala241–Leu266. Over Cys267–Asn279 the chain is Extracellular. A helical membrane pass occupies residues Phe280 to Phe300. Residues Arg301 to Trp317 lie on the Cytoplasmic side of the membrane. Cys315 carries S-palmitoyl cysteine lipidation.

It belongs to the G-protein coupled receptor 1 family. As to quaternary structure, interacts with MGRN1, but does not undergo MGRN1-mediated ubiquitination; this interaction competes with GNAS-binding and thus inhibits agonist-induced cAMP production. Interacts with OPN3; the interaction results in a decrease in MC1R-mediated cAMP signaling and ultimately a decrease in melanin production in melanocytes.

Its subcellular location is the cell membrane. Functionally, receptor for MSH (alpha, beta and gamma) and ACTH. The activity of this receptor is mediated by G proteins which activate adenylate cyclase. Mediates melanogenesis, the production of eumelanin (black/brown) and phaeomelanin (red/yellow), via regulation of cAMP signaling in melanocytes. The chain is Melanocyte-stimulating hormone receptor (MC1R) from Panthera onca (Jaguar).